The primary structure comprises 376 residues: MQAFALSGKKRIVNHGMCFSKGNLDLGSRLSENFMDDPLIPGLPDDVAKQCLALVPRARFPSMGSVCKKWRFVVQSKEFITVRRLAGMLEEWLYVLTMNAGGKDNRWEVMDCLGQKLSSLPPMPGPAKTGFKVVVVDGKLLVIAGCCMINGSLVASADVYQYDTCLNSWSRLADLEVARYDFACAEVNGHVYVVGGHGVDGESLSSAEVYDPETCTWTFIESLRRPRWGCFASAFNGKLYVMGGRSNFTIGNSKLLDVYNTQCGSWHGSKNGLTMVTAHVEVGKKLFCIDWKNHRKMSVFNAEDETWEVVALPLSGSSRAGFQFGKLSGKLLLFSSQEETGQCTLLYDPDASPGTQWKTSEIKLSGSCVCSVTITA.

In terms of domain architecture, F-box spans 37 to 85; that stretch reads DPLIPGLPDDVAKQCLALVPRARFPSMGSVCKKWRFVVQSKEFITVRRL. Kelch repeat units lie at residues 139–189, 190–237, 239–289, and 291–335; these read KLLV…EVNG, HVYV…AFNG, LYVM…LFCI, and WKNH…LLFS.

The sequence is that of F-box/kelch-repeat protein At1g67480 from Arabidopsis thaliana (Mouse-ear cress).